A 208-amino-acid polypeptide reads, in one-letter code: Small ribosomal subunit protein uS4 (208 aa).

The S4 RNA-binding domain maps to arginine 95 to asparagine 157.

The protein belongs to the universal ribosomal protein uS4 family. As to quaternary structure, part of the 30S ribosomal subunit. Contacts protein S5. The interaction surface between S4 and S5 is involved in control of translational fidelity.

Its function is as follows. One of the primary rRNA binding proteins, it binds directly to 16S rRNA where it nucleates assembly of the body of the 30S subunit. With S5 and S12 plays an important role in translational accuracy. The protein is Small ribosomal subunit protein uS4 of Borrelia turicatae (strain 91E135).